The following is a 490-amino-acid chain: Cyclin-A2-1 (490 aa).

A disordered region spans residues Phe34–Arg76. Positions Thr63–Pro72 are enriched in polar residues.

The protein belongs to the cyclin family. Cyclin AB subfamily.

The sequence is that of Cyclin-A2-1 (CYCA2-1) from Oryza sativa subsp. japonica (Rice).